The chain runs to 215 residues: C' protein (215 aa).

Residues 12–34 are disordered; sequence MPSFLKKILKLRGRRQEDESRSR. The segment at 15-22 is involved in self-degradation and in host STAT1 degradation; it reads FLKKILKL.

The protein belongs to the respirovirus protein C family. The different isoforms interact (via C-terminus) with unphosphorylated and phosphorylated human STAT1 (via N-terminus), favoring the formation of parallel STAT1 homodimers. The different isoforms do not interact with host STAT2. C protein interacts with L protein; this interaction has an inhibitory effect on viral transcription and replication. In terms of processing, Y1 and Y2 proteins are produced not only by alternative initiation, but also by proteolytic cleavage of C'. Only alternative initiation is detected in vitro, whereas in vivo cleavage seems to be predominant.

Its subcellular location is the host cytoplasm. It localises to the virion. Functionally, the different isoforms prevent the establishment of cellular antiviral state by blocking the interferon-alpha/beta (IFN-alpha/beta) and IFN-gamma signaling pathways. They inhibit IFN-alpha/beta induced tyrosine phosphorylation of STAT1 and STAT2. Blocking the IFN-alpha/beta pathway requires binding to STAT1 in the cytoplasm. They inhibit IFN-gamma induced serine phosphorylation of STAT1. Block the IFN-gamma pathway by binding to and stabilizing the parallel form of the STAT1 dimer, further inducing high-molecular-weight complex (HMWC) formation and inhibition of transcription by IFN-gamma. May also have a role in preventing the cell to enter apoptosis. Modulate regulation of viral transcription and replication. Overexpression inhibits the viral RNA polymerase. The absence of all C', C, Y1 and Y2 proteins leads to viral delayed growth. Plays an important role in virion particles release. Modulates virion shape. The chain is C' protein (P/V/C) from Sendai virus (strain Z) (SeV).